The primary structure comprises 362 residues: Endolytic peptidoglycan transglycosylase RlpA (362 aa).

A signal peptide spans 1-17; the sequence is MRKQWLGICIAAGMLAA. Residue Cys18 is the site of N-palmitoyl cysteine attachment. A lipid anchor (S-diacylglycerol cysteine) is attached at Cys18. The disordered stretch occupies residues 198 to 276; that stretch reads PDLSGGAGTS…PSTTPATSPA (79 aa). Residues 262-276 show a composition bias toward low complexity; that stretch reads PVVTAPSTTPATSPA. Residues 285-361 form the SPOR domain; it reads QSASGNFMVQ…AQLQSFITTA (77 aa).

The protein belongs to the RlpA family.

The protein localises to the cell membrane. Its function is as follows. Lytic transglycosylase with a strong preference for naked glycan strands that lack stem peptides. This chain is Endolytic peptidoglycan transglycosylase RlpA, found in Escherichia coli O157:H7.